The chain runs to 477 residues: 3-isopropylmalate dehydratase large subunit 1 (477 aa).

[4Fe-4S] cluster is bound by residues Cys357, Cys417, and Cys420.

This sequence belongs to the aconitase/IPM isomerase family. LeuC type 1 subfamily. Heterodimer of LeuC and LeuD. It depends on [4Fe-4S] cluster as a cofactor.

It catalyses the reaction (2R,3S)-3-isopropylmalate = (2S)-2-isopropylmalate. It functions in the pathway amino-acid biosynthesis; L-leucine biosynthesis; L-leucine from 3-methyl-2-oxobutanoate: step 2/4. Catalyzes the isomerization between 2-isopropylmalate and 3-isopropylmalate, via the formation of 2-isopropylmaleate. This is 3-isopropylmalate dehydratase large subunit 1 from Bradyrhizobium diazoefficiens (strain JCM 10833 / BCRC 13528 / IAM 13628 / NBRC 14792 / USDA 110).